We begin with the raw amino-acid sequence, 119 residues long: Ribonuclease P protein component (119 aa).

It belongs to the RnpA family. As to quaternary structure, consists of a catalytic RNA component (M1 or rnpB) and a protein subunit.

It carries out the reaction Endonucleolytic cleavage of RNA, removing 5'-extranucleotides from tRNA precursor.. Functionally, RNaseP catalyzes the removal of the 5'-leader sequence from pre-tRNA to produce the mature 5'-terminus. It can also cleave other RNA substrates such as 4.5S RNA. The protein component plays an auxiliary but essential role in vivo by binding to the 5'-leader sequence and broadening the substrate specificity of the ribozyme. This chain is Ribonuclease P protein component, found in Haemophilus influenzae (strain 86-028NP).